The following is a 182-amino-acid chain: Oligoribonuclease (182 aa).

Positions 8–171 constitute an Exonuclease domain; it reads LIWIDLEMTG…DDIRESIKEL (164 aa). The active site involves Tyr-129.

It belongs to the oligoribonuclease family.

It is found in the cytoplasm. 3'-to-5' exoribonuclease specific for small oligoribonucleotides. This Haemophilus influenzae (strain 86-028NP) protein is Oligoribonuclease.